Consider the following 99-residue polypeptide: Large ribosomal subunit protein uL23c (99 aa).

The protein belongs to the universal ribosomal protein uL23 family. As to quaternary structure, part of the 50S ribosomal subunit.

It is found in the plastid. The protein localises to the chloroplast. Binds to 23S rRNA. This Emiliania huxleyi (Coccolithophore) protein is Large ribosomal subunit protein uL23c (rpl23).